Consider the following 318-residue polypeptide: Acetylglutamate kinase (318 aa).

Substrate contacts are provided by residues 80–81, Arg-102, and Asn-203; that span reads GG.

Belongs to the acetylglutamate kinase family. ArgB subfamily.

The protein localises to the cytoplasm. The enzyme catalyses N-acetyl-L-glutamate + ATP = N-acetyl-L-glutamyl 5-phosphate + ADP. The protein operates within amino-acid biosynthesis; L-arginine biosynthesis; N(2)-acetyl-L-ornithine from L-glutamate: step 2/4. Catalyzes the ATP-dependent phosphorylation of N-acetyl-L-glutamate. The sequence is that of Acetylglutamate kinase from Bifidobacterium adolescentis (strain ATCC 15703 / DSM 20083 / NCTC 11814 / E194a).